The primary structure comprises 107 residues: Ferredoxin 1 (107 aa).

2 consecutive 4Fe-4S ferredoxin-type domains span residues 2–30 and 31–60; these read TFVVTDNCIKCKYTDCVEVCPVDCFYEGP and NFLVIHPDECIDCALCEPECPAQAIFSEDE. [3Fe-4S] cluster is bound by residues Cys9 and Cys17. [4Fe-4S] cluster-binding residues include Cys21, Cys40, Cys43, and Cys46. Cys50 contributes to the [3Fe-4S] cluster binding site.

[4Fe-4S] cluster is required as a cofactor. It depends on [3Fe-4S] cluster as a cofactor.

In terms of biological role, ferredoxins are iron-sulfur proteins that transfer electrons in a wide variety of metabolic reactions. The sequence is that of Ferredoxin 1 from Stutzerimonas stutzeri (Pseudomonas stutzeri).